Reading from the N-terminus, the 354-residue chain is GTPase Obg (354 aa).

Positions 1–159 (MKFVDEVKIH…RDLVLELKLL (159 aa)) constitute an Obg domain. Residues 160–333 (ADVGIVGYPN…LLDAVGRALF (174 aa)) enclose the OBG-type G domain. GTP-binding positions include 166–173 (GYPNAGKS), 191–195 (FTTLT), 212–215 (DIPG), 283–286 (TKID), and 314–316 (SAV). Mg(2+) is bound by residues S173 and T193.

Belongs to the TRAFAC class OBG-HflX-like GTPase superfamily. OBG GTPase family. In terms of assembly, monomer. Mg(2+) is required as a cofactor.

The protein resides in the cytoplasm. Functionally, an essential GTPase which binds GTP, GDP and possibly (p)ppGpp with moderate affinity, with high nucleotide exchange rates and a fairly low GTP hydrolysis rate. Plays a role in control of the cell cycle, stress response, ribosome biogenesis and in those bacteria that undergo differentiation, in morphogenesis control. The polypeptide is GTPase Obg (Anaeromyxobacter dehalogenans (strain 2CP-C)).